Here is a 149-residue protein sequence, read N- to C-terminus: Cell division protein SepF (149 aa).

It belongs to the SepF family. As to quaternary structure, homodimer. Interacts with FtsZ.

It localises to the cytoplasm. Its function is as follows. Cell division protein that is part of the divisome complex and is recruited early to the Z-ring. Probably stimulates Z-ring formation, perhaps through the cross-linking of FtsZ protofilaments. Its function overlaps with FtsA. This chain is Cell division protein SepF, found in Pelotomaculum thermopropionicum (strain DSM 13744 / JCM 10971 / SI).